A 290-amino-acid polypeptide reads, in one-letter code: 4-hydroxy-tetrahydrodipicolinate synthase (290 aa).

Position 44 (Thr-44) interacts with pyruvate. Catalysis depends on Tyr-132, which acts as the Proton donor/acceptor. Lys-160 acts as the Schiff-base intermediate with substrate in catalysis. Ile-202 is a pyruvate binding site.

Belongs to the DapA family. As to quaternary structure, homotetramer; dimer of dimers.

The protein localises to the cytoplasm. It catalyses the reaction L-aspartate 4-semialdehyde + pyruvate = (2S,4S)-4-hydroxy-2,3,4,5-tetrahydrodipicolinate + H2O + H(+). The protein operates within amino-acid biosynthesis; L-lysine biosynthesis via DAP pathway; (S)-tetrahydrodipicolinate from L-aspartate: step 3/4. Catalyzes the condensation of (S)-aspartate-beta-semialdehyde [(S)-ASA] and pyruvate to 4-hydroxy-tetrahydrodipicolinate (HTPA). This chain is 4-hydroxy-tetrahydrodipicolinate synthase, found in Trichlorobacter lovleyi (strain ATCC BAA-1151 / DSM 17278 / SZ) (Geobacter lovleyi).